A 196-amino-acid chain; its full sequence is Transcriptional regulatory protein UhpA (196 aa).

The 114-residue stretch at 3-116 folds into the Response regulatory domain; that stretch reads TVALIDDHLI…ELIAAVHTVA (114 aa). Asp-54 is modified (4-aspartylphosphate). The region spanning 131–196 is the HTH luxR-type domain; that stretch reads AAGRQDPLTK…ELAHRMFDGW (66 aa). The H-T-H motif DNA-binding region spans 155–174; the sequence is VKEIAAELGLSPKTVHVHRA.

Post-translationally, phosphorylated and dephosphorylated by UhpB.

The protein localises to the cytoplasm. Its function is as follows. Part of the UhpABC signaling cascade that controls the expression of the hexose phosphate transporter UhpT. Activates the transcription of the uhpT gene. Acts by binding specifically to the uhpT promoter region. The polypeptide is Transcriptional regulatory protein UhpA (uhpA) (Salmonella typhimurium (strain LT2 / SGSC1412 / ATCC 700720)).